The chain runs to 472 residues: Ribosomal protein uS12 methylthiotransferase RimO (472 aa).

The region spanning 33-143 (NRIGFVSLGC…VLKHVHKYVP (111 aa)) is the MTTase N-terminal domain. Residues Cys42, Cys78, Cys107, Cys175, Cys179, and Cys182 each coordinate [4Fe-4S] cluster. One can recognise a Radical SAM core domain in the interval 161–398 (LTPKHYAYLK…MELQAEISAE (238 aa)). The 67-residue stretch at 401–467 (ARFVGRTLDI…EHDLWAEVVD (67 aa)) folds into the TRAM domain.

It belongs to the methylthiotransferase family. RimO subfamily. It depends on [4Fe-4S] cluster as a cofactor.

The protein resides in the cytoplasm. It catalyses the reaction L-aspartate(89)-[ribosomal protein uS12]-hydrogen + (sulfur carrier)-SH + AH2 + 2 S-adenosyl-L-methionine = 3-methylsulfanyl-L-aspartate(89)-[ribosomal protein uS12]-hydrogen + (sulfur carrier)-H + 5'-deoxyadenosine + L-methionine + A + S-adenosyl-L-homocysteine + 2 H(+). Its function is as follows. Catalyzes the methylthiolation of an aspartic acid residue of ribosomal protein uS12. The chain is Ribosomal protein uS12 methylthiotransferase RimO from Shewanella sp. (strain W3-18-1).